A 364-amino-acid chain; its full sequence is Nuclear hormone receptor family member nhr-53 (364 aa).

The segment at residues 20 to 95 (PSYCLICCEV…VGMQRSSVQQ (76 aa)) is a DNA-binding region (nuclear receptor). 2 consecutive NR C4-type zinc fingers follow at residues 23-43 (CLICCEVADGHHFGAAACRAC) and 59-83 (CPKNGQCFILSNVRNMCRACRYEKC). The region spanning 110-363 (REEPVLDTMR…KNLYDMFSPT (254 aa)) is the NR LBD domain.

This sequence belongs to the nuclear hormone receptor family.

Its subcellular location is the nucleus. Functionally, orphan nuclear receptor. This chain is Nuclear hormone receptor family member nhr-53 (nhr-53), found in Caenorhabditis elegans.